The sequence spans 63 residues: Potassium channel toxin alpha-KTx 21.1 (63 aa).

Residues 1–27 (MQFSGVVLILISMTLVNFVFFETKVEA) form the signal peptide. 3 cysteine pairs are disulfide-bonded: Cys33–Cys53, Cys38–Cys58, and Cys42–Cys60.

This sequence belongs to the short scorpion toxin superfamily. Potassium channel inhibitor family. Alpha-KTx 21 subfamily. Expressed by the venom gland.

The protein resides in the secreted. Reversibly and voltage-independently blocks voltage-gated potassium channels rKv1.2/KCNA2 (73%) (IC(50)=196 nM), hKv1.3/KCNA3 (50%) (IC(50)=508 nM), Shaker IR (30%), rKv1.6/KCNA6 (22%) (at 0.5 uM). Interaction of Ts15 with Kv1.3/KCNA3 is stronger than its interaction with Kv1.2/KCNA2. The sequence is that of Potassium channel toxin alpha-KTx 21.1 from Tityus serrulatus (Brazilian scorpion).